The primary structure comprises 600 residues: Aspartate--tRNA(Asp/Asn) ligase (600 aa).

Glutamate 187 provides a ligand contact to L-aspartate. The interval 211–214 (QIFK) is aspartate. Arginine 233 and histidine 463 together coordinate L-aspartate. 233 to 235 (RDE) serves as a coordination point for ATP. Position 497 (glutamate 497) interacts with ATP. Arginine 504 provides a ligand contact to L-aspartate. 549–552 (GVDR) contacts ATP.

The protein belongs to the class-II aminoacyl-tRNA synthetase family. Type 1 subfamily. In terms of assembly, homodimer.

The protein localises to the cytoplasm. The enzyme catalyses tRNA(Asx) + L-aspartate + ATP = L-aspartyl-tRNA(Asx) + AMP + diphosphate. Its function is as follows. Aspartyl-tRNA synthetase with relaxed tRNA specificity since it is able to aspartylate not only its cognate tRNA(Asp) but also tRNA(Asn). Reaction proceeds in two steps: L-aspartate is first activated by ATP to form Asp-AMP and then transferred to the acceptor end of tRNA(Asp/Asn). The sequence is that of Aspartate--tRNA(Asp/Asn) ligase from Wolbachia sp. subsp. Drosophila simulans (strain wRi).